We begin with the raw amino-acid sequence, 123 residues long: MQFTALFAATAVALVGSVSATACTTTQQTAAYVALVSILSESFFSTCASDSGYSMLTATALPTTAQYELMCASTACQEMIEEIIALNPPDCDLTVPTSGLVINVYEYANDFASTCASLSSSPA.

A signal peptide spans 1–20; the sequence is MQFTALFAATAVALVGSVSA. Cystine bridges form between cysteine 23–cysteine 91, cysteine 47–cysteine 76, and cysteine 71–cysteine 115.

The protein belongs to the elicitin family.

The protein localises to the secreted. Its function is as follows. Induces local and distal defense responses (incompatible hypersensitive reaction) in plants from the solanaceae and cruciferae families. Elicits leaf necrosis and causes the accumulation of pathogenesis-related proteins. Might interact with the lipidic molecules of the plasma membrane. This Phytophthora cryptogea protein is Highly acidic elicitin 20 (B20).